The primary structure comprises 209 residues: Ion-translocating oxidoreductase complex subunit G (209 aa).

At 1 to 8 the chain is on the cytoplasmic side; that stretch reads MLTAIRKN. The helical transmembrane segment at 9–29 threads the bilayer; sequence GLILAVFACVSTGLVALTYAL. Residues 30–209 are Periplasmic-facing; the sequence is TAEQIQQQEQ…HNQPNPCEGQ (180 aa). Thr-175 carries the post-translational modification FMN phosphoryl threonine.

Belongs to the RnfG family. As to quaternary structure, the complex is composed of six subunits: RnfA, RnfB, RnfC, RnfD, RnfE and RnfG. FMN serves as cofactor.

It localises to the cell inner membrane. In terms of biological role, part of a membrane-bound complex that couples electron transfer with translocation of ions across the membrane. The chain is Ion-translocating oxidoreductase complex subunit G from Vibrio cholerae serotype O1 (strain ATCC 39541 / Classical Ogawa 395 / O395).